The sequence spans 345 residues: MENTLGLEIIEVVEQAAIASAKWMGKGEKNTADQVAVEAMRERMNKIYMRGRIVIGEGERDDAPMLYIGEEVGICTQPNADQLCNPDELVEIDIAVDPCEGTNLVAYGQPGSMAVLAISEKGGLFAAPDFYMKKLAAPPAAKGKVDINKSATENLKILSECLDRAIDELVVVVMKRDRHQGLIKEIRDAGARVQLISDGDVGAAISCGFAGTNIHALMGIGAAPEGVISAAAMRALGGHFQGQLIYDPEVVKTGLIGESKEANLERLSSMGINDPDKVYDAHELASGETVLFAACGITSGNLMQGVRFFHGGARTQSLVISSQSQTARFVDTIHMAGQPKTVQLH.

The Mn(2+) site is built by Asp33, Glu57, Asp97, and Glu100. Residues 100-102 (EGT), Tyr131, 176-178 (RDR), and 198-200 (DGD) each bind substrate. Residue Glu225 coordinates Mn(2+).

This sequence belongs to the FBPase class 2 family. As to quaternary structure, homotetramer. The cofactor is Mn(2+).

The catalysed reaction is beta-D-fructose 1,6-bisphosphate + H2O = beta-D-fructose 6-phosphate + phosphate. The enzyme catalyses D-sedoheptulose 1,7-bisphosphate + H2O = D-sedoheptulose 7-phosphate + phosphate. It functions in the pathway carbohydrate biosynthesis; Calvin cycle. Catalyzes the hydrolysis of fructose 1,6-bisphosphate (Fru 1,6-P2) and sedoheptulose 1,7-bisphosphate (Sed 1,7-P2) to fructose 6-phosphate and sedoheptulose 7-phosphate, respectively. In Trichormus variabilis (strain ATCC 29413 / PCC 7937) (Anabaena variabilis), this protein is D-fructose 1,6-bisphosphatase class 2/sedoheptulose 1,7-bisphosphatase.